A 205-amino-acid chain; its full sequence is Adenylate kinase (205 aa).

An ATP-binding site is contributed by 10–15 (GAGKGT). An NMP region spans residues 30–59 (STGDMLRAAVAQGSEVGKVAEGIMARGELV). AMP-binding positions include T31, R36, 57-59 (ELV), 85-88 (GFPR), and Q92. The tract at residues 126-139 (TRAAETAGGPRADD) is LID. R127 contributes to the ATP binding site. AMP is bound by residues R136 and R147. K175 serves as a coordination point for ATP.

This sequence belongs to the adenylate kinase family. Monomer.

Its subcellular location is the cytoplasm. It carries out the reaction AMP + ATP = 2 ADP. The protein operates within purine metabolism; AMP biosynthesis via salvage pathway; AMP from ADP: step 1/1. Catalyzes the reversible transfer of the terminal phosphate group between ATP and AMP. Plays an important role in cellular energy homeostasis and in adenine nucleotide metabolism. The sequence is that of Adenylate kinase from Parvibaculum lavamentivorans (strain DS-1 / DSM 13023 / NCIMB 13966).